The following is a 637-amino-acid chain: 3D-(3,5/4)-trihydroxycyclohexane-1,2-dione hydrolase (637 aa).

Glutamate 65 contacts thiamine diphosphate. Residues 441-521 (SLPGDLQRLW…INVLLFDNSG (81 aa)) form a thiamine pyrophosphate binding region. Mg(2+) is bound by residues aspartate 492 and asparagine 519.

It belongs to the TPP enzyme family. Mg(2+) serves as cofactor. The cofactor is thiamine diphosphate.

It carries out the reaction 3D-3,5/4-trihydroxycyclohexane-1,2-dione + H2O = 5-deoxy-D-glucuronate + H(+). The protein operates within polyol metabolism; myo-inositol degradation into acetyl-CoA; acetyl-CoA from myo-inositol: step 3/7. Its function is as follows. Involved in the cleavage of the C1-C2 bond of 3D-(3,5/4)-trihydroxycyclohexane-1,2-dione (THcHDO) to yield 5-deoxy-glucuronate (5DG). In Halalkalibacterium halodurans (strain ATCC BAA-125 / DSM 18197 / FERM 7344 / JCM 9153 / C-125) (Bacillus halodurans), this protein is 3D-(3,5/4)-trihydroxycyclohexane-1,2-dione hydrolase.